The sequence spans 392 residues: MSREPTPPLPGDMSTSPVAESWCYTQVKVVKFSYMWTINNFSFCREEMGEVLKSSTFSSGPNDKMKWCLRVNPKGLDDESKDYLSLYLLLVSCPKSEVRAKFKFSLLNDKREETKAMESQRAYRFVQGKDWGFKKFIRRDFLLDEANGLLPDDKLTLFCEVSVVQDSVNVSGHTSTNTLKVPECRLAEDLGNLWENTRFTDCCFFVRGKEFKAHKSVLAARSPVFNAMFEHEMEECTKNRVEINDLDPEVFKEMMRFVYTGKAPNLDKMADNLLAAADKYALERLKVMCEEALCSNLSVENVADTLVLADLHSAEQLKAQAIDFINRCSVLRQLGCKDGKNWNNNQATDIMETSGWKSMIQSHPHLVAEAFRALASSQCPQFGIPRKRLKQS.

Residues 31–161 form the MATH domain; that stretch reads KFSYMWTINN…DDKLTLFCEV (131 aa). In terms of domain architecture, BTB spans 200–267; the sequence is TDCCFFVRGK…VYTGKAPNLD (68 aa).

Belongs to the Tdpoz family. As to quaternary structure, homodimer. Heterodimer with SPOP. Component of cullin-RING-based BCR (BTB-CUL3-RBX1) E3 ubiquitin-protein ligase complexes containing homodimeric SPOPL or the heterodimer formed by SPOP and SPOPL. Interacts with CUL3 and MACROH2A1.

Its subcellular location is the nucleus. The protein operates within protein modification; protein ubiquitination. Component of a cullin-RING-based BCR (BTB-CUL3-RBX1) E3 ubiquitin-protein ligase complex that mediates the ubiquitination and subsequent proteasomal degradation of target proteins, but with relatively low efficiency. Cullin-RING-based BCR (BTB-CUL3-RBX1) E3 ubiquitin-protein ligase complexes containing homodimeric SPOPL or the heterodimer formed by SPOP and SPOPL are less efficient than ubiquitin ligase complexes containing only SPOP. May function to down-regulate the activity of cullin-RING-based BCR (BTB-CUL3-RBX1) E3 ubiquitin-protein ligase complexes that contain SPOP. This chain is Speckle-type POZ protein-like (Spopl), found in Mus musculus (Mouse).